Consider the following 170-residue polypeptide: Calcineurin subunit B type 2 (170 aa).

G2 carries the N-myristoyl glycine lipid modification. EF-hand domains follow at residues 18–46 (DEIK…FMSL), 50–85 (RHNP…FSVK), 87–122 (DEEQ…MVGN), and 128–163 (QLQQ…LEIH). The Ca(2+) site is built by D31, D33, S35, S37, E42, D63, D65, D67, E69, E74, D100, D102, D104, Y106, and E111. A calcineurin A binding region spans residues 131-136 (QLVDKT). Ca(2+) contacts are provided by D141, D143, D145, K147, and E152.

The protein belongs to the calcineurin regulatory subunit family. As to quaternary structure, forms a complex composed of a calmodulin-dependent catalytic subunit (also known as calcineurin A) and a regulatory Ca(2+)-binding subunit (also known as calcineurin B). There are three catalytic subunits, each encoded by a separate gene (PPP3CA, PPP3CB, and PPP3CC) and two regulatory subunits which are also encoded by separate genes (PPP3R1 and PPP3R2). Interacts with SPATA33 (via PQIIIT motif). As to expression, testis-specific.

Its subcellular location is the mitochondrion. Functionally, regulatory subunit of calcineurin, a calcium-dependent, calmodulin stimulated protein phosphatase. Confers calcium sensitivity. This Homo sapiens (Human) protein is Calcineurin subunit B type 2 (PPP3R2).